Consider the following 522-residue polypeptide: Na(+)/H(+) antiporter NhaB (522 aa).

11 helical membrane-spanning segments follow: residues 25–45 (VFLV…GWLL), 49–69 (FIFT…GMLA), 87–107 (ILAN…IYFM), 128–162 (LSLA…FYGV), 201–221 (LMMH…VGEP), 237–257 (FFFR…VTCI), 302–322 (VFVG…VGLI), 356–376 (LVVF…APVI), 388–408 (LLLF…VFVA), 446–466 (ATPN…SPLI), and 476–496 (MALP…EYVL).

The protein belongs to the NhaB Na(+)/H(+) (TC 2.A.34) antiporter family.

It localises to the cell inner membrane. The catalysed reaction is 2 Na(+)(in) + 3 H(+)(out) = 2 Na(+)(out) + 3 H(+)(in). Functionally, na(+)/H(+) antiporter that extrudes sodium in exchange for external protons. This is Na(+)/H(+) antiporter NhaB from Actinobacillus succinogenes (strain ATCC 55618 / DSM 22257 / CCUG 43843 / 130Z).